The primary structure comprises 715 residues: Putative pentatricopeptide repeat-containing protein At3g23330 (715 aa).

PPR repeat units follow at residues 38-68 (SHTSASIVISIYTNLKLLHEALLLFKTLKSP), 69-103 (PVLAWKSVIRCFTDQSLFSKALASFVEMRASGRCP), 104-138 (DHNVFPSVLKSCTMMMDLRFGESVHGFIVRLGMDC), 139-172 (DLYTGNALMNMYAKLLGMGSKISVGNVFDEMPQR), 206-240 (DVVSYNTIIAGYAQSGMYEDALRMVREMGTTDLKP), 241-275 (DSFTLSSVLPIFSEYVDVIKGKEIHGYVIRKGIDS), 276-306 (DVYIGSSLVDMYAKSARIEDSERVFSRLYCR), 307-341 (DGISWNSLVAGYVQNGRYNEALRLFRQMVTAKVKP), 342-376 (GAVAFSSVIPACAHLATLHLGKQLHGYVLRGGFGS), 377-407 (NIFIASALVDMYSKCGNIKAARKIFDRMNVL), 408-442 (DEVSWTAIIMGHALHGHGHEAVSLFEEMKRQGVKP), 443-473 (NQVAFVAVLTACSHVGLVDEAWGYFNSMTKV), and 479-509 (ELEHYAAVADLLGRAGKLEEAYNFISKMCVE). The tract at residues 514–589 (VWSTLLSSCS…KPACSWIEMK (76 aa)) is type E motif. The segment at 590–620 (NKTHGFVSGDRSHPSMDKINEFLKAVMEQME) is type E(+) motif. Positions 621 to 715 (KEGYVADTSG…RGNCSCGDYW (95 aa)) are type DYW motif.

The protein belongs to the PPR family. PCMP-H subfamily.

This chain is Putative pentatricopeptide repeat-containing protein At3g23330 (PCMP-H32), found in Arabidopsis thaliana (Mouse-ear cress).